Reading from the N-terminus, the 281-residue chain is uncharacterized protein (281 aa).

2 disordered regions span residues 192 to 212 (SNSS…IQET) and 227 to 281 (EDYV…SEEY). Over residues 200-211 (MDKKSDDSKIQE) the composition is skewed to basic and acidic residues. Acidic residues-rich tracts occupy residues 227-240 (EDYV…ISDN) and 249-260 (DTDSDLGDLEDP).

It belongs to the cullin family.

This is an uncharacterized protein from Acanthamoeba polyphaga (Amoeba).